Here is a 450-residue protein sequence, read N- to C-terminus: MGKYFGTDGVRGEANVELTPELAFKLGRFGGYVLSQHETGTPRVFVARDTRISGEMLESALVAGLLSVGIEVYKLGVLATPGVSYLVRTENASAGVMISASHNPALDNGIKFFGSDGFKLADDQELEIEALLDAEEDTLPRPSAEGLGTLVDYPEGLRKYEKFLVSTGINLEGMKVALDTANGAASVSARDVFLDLQADISVIGEQPNGLNINDGIGSTHPEKLQELVKETGSAVGLAFDGDSDRLIAVDENGDIVDGDKIMFIIGKYLSEKGLLAQNTIVTTVMSNLGFHKALDQHGINKAVTAVGDRYVVEEMRQSNYNLGGEQSGHVIIMDYNTTGDGQLTAIQLTKVMKETGMSLSELAAQVTIYPQKLVNIRVDNSMKHKAMEVPAIAAIIEKMEAEMQGNGRILVRPSGTEPLLRVMAEAPTDEEVDYYVDTIADVVRTEIGIA.

Residue serine 101 is the Phosphoserine intermediate of the active site. Mg(2+) contacts are provided by serine 101, aspartate 240, aspartate 242, and aspartate 244. Phosphoserine is present on serine 101.

The protein belongs to the phosphohexose mutase family. The cofactor is Mg(2+). Post-translationally, activated by phosphorylation.

It carries out the reaction alpha-D-glucosamine 1-phosphate = D-glucosamine 6-phosphate. Catalyzes the conversion of glucosamine-6-phosphate to glucosamine-1-phosphate. In Streptococcus uberis (strain ATCC BAA-854 / 0140J), this protein is Phosphoglucosamine mutase.